Consider the following 136-residue polypeptide: Flagellar basal-body rod protein FlgC (136 aa).

The protein belongs to the flagella basal body rod proteins family. In terms of assembly, the basal body constitutes a major portion of the flagellar organelle and consists of four rings (L,P,S, and M) mounted on a central rod. The rod consists of about 26 subunits of FlgG in the distal portion, and FlgB, FlgC and FlgF are thought to build up the proximal portion of the rod with about 6 subunits each.

Its subcellular location is the bacterial flagellum basal body. This is Flagellar basal-body rod protein FlgC (flgC) from Buchnera aphidicola subsp. Baizongia pistaciae (strain Bp).